Consider the following 868-residue polypeptide: Sporulation-specific protein 75 (868 aa).

Residues 1–34 are Extracellular-facing; the sequence is MNATKELTFNLLNKFQDKERFGSAQRHAGISLKG. N2 carries N-linked (GlcNAc...) asparagine glycosylation. A helical membrane pass occupies residues 35–55; it reads FISGILFSFLYFLFQLSLFII. Over 56-127 the chain is Cytoplasmic; sequence LRSRFKTIYQ…DNYLFLRFLK (72 aa). The chain crosses the membrane as a helical span at residues 128–148; sequence LLIFFFAVLSIINIPILIPIH. The Extracellular segment spans residues 149 to 187; the sequence is YFSRDILKENEGERYEQSFRTTSKLDKWTMSNLSPNSSN. N184 carries N-linked (GlcNAc...) asparagine glycosylation. Residues 188–208 traverse the membrane as a helical segment; it reads TLICHLFLSIFVVLWFHFILS. Residues 209–481 are Cytoplasmic-facing; the sequence is SELRFVNRLG…AKYFSANILR (273 aa). Residues 482 to 502 form a helical membrane-spanning segment; sequence IFVIIGWILPVAFLGLISQIP. Residue N503 is glycosylated (N-linked (GlcNAc...) asparagine). Residues 503 to 527 are Extracellular-facing; that stretch reads NISSLIPFTKIIHFQSPFIREVAKN. Residues 528–548 traverse the membrane as a helical segment; that stretch reads LIPIVTLIIIIEIVPYFFRWL. The Cytoplasmic portion of the chain corresponds to 549 to 569; it reads SYLRGLKTGAQIEADVQNWYF. A helical transmembrane segment spans residues 570 to 590; the sequence is VFVFIHLFVVVTISSGFSIII. The Extracellular segment spans residues 591 to 611; the sequence is ERLLNNPVSIPALLANDLPKC. A helical transmembrane segment spans residues 612 to 632; the sequence is ANFFCSFVLIRGMAYAGGNLL. Residues 633-660 are Cytoplasmic-facing; the sequence is RIKELLFELFYYKWKRSTPHAQFKRLKT. The chain crosses the membrane as a helical span at residues 661-683; the sequence is SLFFQLGSIYPIFSVLGCIGIIY. The Extracellular portion of the chain corresponds to 684 to 692; it reads SVVAPIILL. A helical membrane pass occupies residues 693 to 713; it reads LCCISFSMVFFSFSYLFKYQY. At 714 to 730 the chain is on the cytoplasmic side; sequence NKENYSETFGKLYIQAL. A helical membrane pass occupies residues 731 to 751; sequence MQLYAGIYFMEFCLLGLFTLF. Topologically, residues 752–753 are extracellular; the sequence is DQ. The helical transmembrane segment at 754–774 threads the bilayer; it reads YTLSTIMLVVFALTVITHSKI. Topologically, residues 775–868 are cytoplasmic; the sequence is SKQIKSKPQR…DCHLENSHLH (94 aa).

The protein belongs to the CSC1 (TC 1.A.17) family.

The protein localises to the membrane. In terms of biological role, acts as an osmosensitive calcium-permeable cation channel. Required for spore wall assembly and ascus formation. The protein is Sporulation-specific protein 75 (SPO75) of Saccharomyces cerevisiae (strain ATCC 204508 / S288c) (Baker's yeast).